Consider the following 475-residue polypeptide: Ribulose bisphosphate carboxylase large chain (475 aa).

A propeptide spanning residues 1–2 (MS) is cleaved from the precursor. Residue Pro3 is modified to N-acetylproline. Residue Lys14 is modified to N6,N6,N6-trimethyllysine. Residues Asn123 and Thr173 each coordinate substrate. The active-site Proton acceptor is Lys175. Lys177 lines the substrate pocket. Residues Lys201, Asp203, and Glu204 each coordinate Mg(2+). Lys201 is subject to N6-carboxylysine. His294 (proton acceptor) is an active-site residue. Residues Arg295, His327, and Ser379 each coordinate substrate.

This sequence belongs to the RuBisCO large chain family. Type I subfamily. In terms of assembly, heterohexadecamer of 8 large chains and 8 small chains; disulfide-linked. The disulfide link is formed within the large subunit homodimers. Requires Mg(2+) as cofactor. Post-translationally, the disulfide bond which can form in the large chain dimeric partners within the hexadecamer appears to be associated with oxidative stress and protein turnover.

Its subcellular location is the plastid. It is found in the chloroplast. The enzyme catalyses 2 (2R)-3-phosphoglycerate + 2 H(+) = D-ribulose 1,5-bisphosphate + CO2 + H2O. It carries out the reaction D-ribulose 1,5-bisphosphate + O2 = 2-phosphoglycolate + (2R)-3-phosphoglycerate + 2 H(+). Its function is as follows. RuBisCO catalyzes two reactions: the carboxylation of D-ribulose 1,5-bisphosphate, the primary event in carbon dioxide fixation, as well as the oxidative fragmentation of the pentose substrate in the photorespiration process. Both reactions occur simultaneously and in competition at the same active site. This chain is Ribulose bisphosphate carboxylase large chain, found in Vitis vinifera (Grape).